The sequence spans 557 residues: Nucleoporin AMO1 (557 aa).

The C3H1-type zinc finger occupies 1–25; the sequence is MTVCRFWQQGYCRNGNACKFEHPPK. Residues 114-141 are a coiled coil; the sequence is QGALNEIQAAYQAAQQQIQNTLQNIPAA. The segment at 161 to 297 is disordered; sequence ESSKGSSTGG…SALGPKPGAF (137 aa). SXFG repeat units lie at residues 171-174, 200-203, 213-216, 228-231, 240-243, 249-252, 262-265, 282-285, 303-306, and 314-317; these read SVFG, SAFG, STFG, and SPFG. Residues 195–215 are compositionally biased toward polar residues; sequence STPSTSAFGQPSPLGQKSSAF. Residues 243–253 show a composition bias toward polar residues; that stretch reads GSPQTGSTFGQ. The tract at residues 315–463 is disordered; that stretch reads PFGAAAQATQ…DLLSYATKNP (149 aa). Composition is skewed to polar residues over residues 321–338 and 351–366; these read QATQ…QAAN and GQPS…GQPS. SXFG repeat units follow at residues 348–351, 370–373, 387–390, and 407–410; these read SAFG and SLFG. Low complexity predominate over residues 367–385; that stretch reads TQSSAFGQQQPQQAGTFGS. The span at 388–429 shows a compositional bias: polar residues; it reads LFGQQQQQPSNVFGQPSTTSAFGSQAATSGFSQLGNATSTIG. Residues 430–443 show a composition bias toward low complexity; that stretch reads ASPAGAQAPASKSP.

The nuclear pore complex (NPC) constitutes the exclusive means of nucleocytoplasmic transport. NPCs allow the passive diffusion of ions and small molecules and the active, nuclear transport receptor-mediated bidirectional transport of macromolecules such as proteins, RNAs, ribonucleoparticles (RNPs), and ribosomal subunits across the nuclear envelope. The 55-60 MDa NPC is composed of at least 28 different subunits: AMO1, ELYS, GLE1, GLE2, MLP1, NDC1, NIC96, NSP1, NUP133, NUP145, NUP152, NUP159, NUP170, NUP188, NUP192, NUP37, NUP49, NUP53, NUP56, NUP57, NUP82, NUP84, NUP85, POM152, POM33, POM34, SEC13 and SEH1. Due to its 8-fold rotational symmetry, all subunits are present with 8 copies or multiples thereof.

It is found in the nucleus. The protein localises to the nuclear pore complex. Its subcellular location is the nucleus membrane. In terms of biological role, functions as a component of the nuclear pore complex (NPC). NPC components, collectively referred to as nucleoporins (NUPs), can play the role of both NPC structural components and of docking or interaction partners for transiently associated nuclear transport factors. Active directional transport is assured by both, a Phe-Gly (FG) repeat affinity gradient for these transport factors across the NPC and a transport cofactor concentration gradient across the nuclear envelope (GSP1 and GSP2 GTPases associated predominantly with GTP in the nucleus, with GDP in the cytoplasm). AMO1 is specifically important for nuclear protein and mRNA export. In Chaetomium thermophilum (strain DSM 1495 / CBS 144.50 / IMI 039719) (Thermochaetoides thermophila), this protein is Nucleoporin AMO1 (AMO1).